The chain runs to 229 residues: 3,4-dihydroxy-2-butanone 4-phosphate synthase (229 aa).

D-ribulose 5-phosphate-binding positions include 28 to 29 (RE), D33, 164 to 168 (RGGHT), and E188. E29 contributes to the Mg(2+) binding site. Residue H167 coordinates Mg(2+).

The protein belongs to the DHBP synthase family. In terms of assembly, homodimer. The cofactor is Mg(2+). It depends on Mn(2+) as a cofactor.

It carries out the reaction D-ribulose 5-phosphate = (2S)-2-hydroxy-3-oxobutyl phosphate + formate + H(+). The protein operates within cofactor biosynthesis; riboflavin biosynthesis; 2-hydroxy-3-oxobutyl phosphate from D-ribulose 5-phosphate: step 1/1. Its function is as follows. Catalyzes the conversion of D-ribulose 5-phosphate to formate and 3,4-dihydroxy-2-butanone 4-phosphate. This is 3,4-dihydroxy-2-butanone 4-phosphate synthase from Methanothermobacter thermautotrophicus (strain ATCC 29096 / DSM 1053 / JCM 10044 / NBRC 100330 / Delta H) (Methanobacterium thermoautotrophicum).